The chain runs to 275 residues: Calcyphosin (275 aa).

Residues 59 to 87 (PGTTQLTQGPAGRTLGQTQASCPEPRPSM) are disordered. 4 consecutive EF-hand domains span residues 107–142 (SGIQ…LGLV), 143–178 (LDQA…PMSQ), 179–214 (AREA…RAHP), and 222–258 (TEDE…VSAS). Residues Asp-120, Asp-122, Ser-124, Ser-126, Glu-131, Asp-156, Asn-158, Ser-160, Thr-162, Glu-167, Asp-192, Ser-194, Asp-196, and Asp-203 each coordinate Ca(2+). Ser-126 is modified (phosphoserine; by PKA).

Monomer. Does not form oligomers in the presence of calcium.

The protein resides in the cytoplasm. Its function is as follows. Calcium-binding protein. May play a role in cellular signaling events (Potential). This Homo sapiens (Human) protein is Calcyphosin.